Consider the following 179-residue polypeptide: Large ribosomal subunit protein uL6 (179 aa).

Belongs to the universal ribosomal protein uL6 family. Part of the 50S ribosomal subunit.

Functionally, this protein binds to the 23S rRNA, and is important in its secondary structure. It is located near the subunit interface in the base of the L7/L12 stalk, and near the tRNA binding site of the peptidyltransferase center. The polypeptide is Large ribosomal subunit protein uL6 (Syntrophobacter fumaroxidans (strain DSM 10017 / MPOB)).